The sequence spans 74 residues: MASSGAGVTAAGSANEAPEIPDNVGDWLRGVYRFATDRNDFRRNLILNLGLFAAGVWLARNLSDIDLMAPQPGV.

Over residues M1 to A14 the composition is skewed to low complexity. Residues M1–V24 form a disordered region. An N-acetylalanine modification is found at A2.

The protein belongs to the Tom6 family. In terms of assembly, forms part of the preprotein translocase complex of the outer mitochondrial membrane (TOM complex) which consists of at least 7 different proteins (TOMM5, TOMM6, TOMM7, TOMM20, TOMM22, TOMM40 and TOMM70).

Its subcellular location is the mitochondrion outer membrane. In Bos taurus (Bovine), this protein is Mitochondrial import receptor subunit TOM6 homolog (TOMM6).